A 444-amino-acid chain; its full sequence is N-succinylarginine dihydrolase (444 aa).

Residues 19-28 (AGLSFGNVAS), Asn-110, and 137-138 (HR) contribute to the substrate site. Glu-174 is an active-site residue. Arg-214 contacts substrate. Residue His-250 is part of the active site. The substrate site is built by Asp-252 and Asn-362. The Nucleophile role is filled by Cys-368.

It belongs to the succinylarginine dihydrolase family. Homodimer.

It catalyses the reaction N(2)-succinyl-L-arginine + 2 H2O + 2 H(+) = N(2)-succinyl-L-ornithine + 2 NH4(+) + CO2. It functions in the pathway amino-acid degradation; L-arginine degradation via AST pathway; L-glutamate and succinate from L-arginine: step 2/5. Its function is as follows. Catalyzes the hydrolysis of N(2)-succinylarginine into N(2)-succinylornithine, ammonia and CO(2). The polypeptide is N-succinylarginine dihydrolase (Shewanella sp. (strain ANA-3)).